Here is a 108-residue protein sequence, read N- to C-terminus: Peptidyl-prolyl cis-trans isomerase FKBP1A (108 aa).

The 89-residue stretch at 20–108 (GQTCVVHYTG…VFDVELLKLE (89 aa)) folds into the PPIase FKBP-type domain. Lys53 is modified (N6-acetyllysine; alternate). An N6-succinyllysine; alternate modification is found at Lys53.

This sequence belongs to the FKBP-type PPIase family. FKBP1 subfamily. In terms of assembly, interacts with TGFBR1; prevents TGFBR1 phosphorylation by TGFBR2 and stabilizes it in the inactive conformation. Interacts with ACVR1B and SMAD7. Identified in a complex composed of RYR1, PDE4D, PKA, FKBP1A and protein phosphatase 1 (PP1). Interacts directly with RYR2 and RYR3. Interacts with GLMN; rapamycin and FK506 abolish the interaction with GLMN in a dose dependent manner. Interacts directly with RYR1.

It localises to the cytoplasm. It is found in the cytosol. The protein localises to the sarcoplasmic reticulum membrane. The catalysed reaction is [protein]-peptidylproline (omega=180) = [protein]-peptidylproline (omega=0). Inhibited by both FK506 and rapamycin. Keeps in an inactive conformation TGFBR1, the TGF-beta type I serine/threonine kinase receptor, preventing TGF-beta receptor activation in absence of ligand. Recruits SMAD7 to ACVR1B which prevents the association of SMAD2 and SMAD3 with the activin receptor complex, thereby blocking the activin signal. May modulate the RYR1 calcium channel activity. PPIases accelerate the folding of proteins. It catalyzes the cis-trans isomerization of proline imidic peptide bonds in oligopeptides. This chain is Peptidyl-prolyl cis-trans isomerase FKBP1A (FKBP1A), found in Homo sapiens (Human).